A 222-amino-acid chain; its full sequence is Urease accessory protein UreF (222 aa).

Belongs to the UreF family. In terms of assembly, ureD, UreF and UreG form a complex that acts as a GTP-hydrolysis-dependent molecular chaperone, activating the urease apoprotein by helping to assemble the nickel containing metallocenter of UreC. The UreE protein probably delivers the nickel.

Its subcellular location is the cytoplasm. Required for maturation of urease via the functional incorporation of the urease nickel metallocenter. In Hahella chejuensis (strain KCTC 2396), this protein is Urease accessory protein UreF.